The primary structure comprises 248 residues: Mannose-binding protein C (248 aa).

An N-terminal signal peptide occupies residues 1–20 (MSLFPSLPLLLLSMVAASYS). Positions 42-99 (GINGFPGKDGRDGTKGEKGEPGQGLRGLQGPPGKLGPPGNPGPSGSPGAKGQKGDPGA) constitute a Collagen-like domain. A disordered region spans residues 43–112 (INGFPGKDGR…CDSSLANPER (70 aa)). Pro-47 carries the post-translational modification 4-hydroxyproline. Positions 49–61 (KDGRDGTKGEKGE) are enriched in basic and acidic residues. A 4-hydroxyproline mark is found at Pro-73, Pro-79, Pro-82, and Pro-88. Residues 112-130 (RKTLQTEINRIKKWVTFSL) adopt a coiled-coil conformation. In terms of domain architecture, C-type lectin spans 134–245 (VGKKLFLTNG…CSSSHLVICE (112 aa)). 2 disulfides stabilise this stretch: Cys-155/Cys-244 and Cys-222/Cys-236.

In terms of assembly, oligomeric complex of 3 or more homotrimers. Interacts with MASP1 and MASP2. Interacts with MEP1A and MEP1B and may inhibit their catalytic activity. Post-translationally, hydroxylation on proline residues within the sequence motif, GXPG, is most likely to be 4-hydroxy as this fits the requirement for 4-hydroxylation in vertebrates.

The protein localises to the secreted. Calcium-dependent lectin involved in innate immune defense. Binds mannose, fucose and N-acetylglucosamine on different microorganisms and activates the lectin complement pathway. Binds to late apoptotic cells, as well as to apoptotic blebs and to necrotic cells, but not to early apoptotic cells, facilitating their uptake by macrophages. This Callithrix jacchus (White-tufted-ear marmoset) protein is Mannose-binding protein C (MBL2).